The sequence spans 420 residues: DNA primase small subunit (420 aa).

Met-1 carries the N-acetylmethionine modification. Catalysis depends on residues Glu-44, Asp-109, and Asp-111. Residues Asp-109 and Asp-111 each coordinate Mg(2+). Positions 109 and 111 each coordinate Mn(2+). A ribonucleoside 5'-triphosphate is bound at residue Asp-109–Asp-111. Zn(2+)-binding residues include Cys-121, Cys-122, Cys-128, and Cys-131. The short motif at Cys-121–Cys-131 is the Zinc knuckle motif element. Ser-160–His-166 contributes to the a ribonucleoside 5'-triphosphate binding site. Position 306 (Asp-306) interacts with Mg(2+). Asp-306 provides a ligand contact to Mn(2+). Residues His-315–Lys-318 and His-324 each bind a ribonucleoside 5'-triphosphate. Over residues Asn-363 to Glu-373 the composition is skewed to acidic residues. The disordered stretch occupies residues Asn-363–Asp-382.

It belongs to the eukaryotic-type primase small subunit family. As to quaternary structure, heterodimer of a catalytic subunit PRIM1 and a regulatory subunit PRIM2, also known as the DNA primase complex. Interacts with PRIM2 (via C-terminus). Component of the alpha DNA polymerase complex (also known as the alpha DNA polymerase-primase complex) consisting of four subunits: the catalytic subunit POLA1, the regulatory subunit POLA2, and the primase complex subunits PRIM1 and PRIM2 respectively. Within the complex, POLA1 directly interacts with PRIM2. It depends on Mg(2+) as a cofactor. The cofactor is Mn(2+).

The catalysed reaction is ssDNA + n NTP = ssDNA/pppN(pN)n-1 hybrid + (n-1) diphosphate.. With respect to regulation, the presence of the regulatory subunit PRIM2/p58 accelerates the kinetics of initiation and primer extension. Inhibited by arabinose nucleoside derivatives such as fludarabine and vidarabine. Functionally, catalytic subunit of the DNA primase complex and component of the DNA polymerase alpha complex (also known as the alpha DNA polymerase-primase complex - primosome/replisome) which play an essential role in the initiation of DNA synthesis. During the S phase of the cell cycle, the DNA polymerase alpha complex (composed of a catalytic subunit POLA1, an accessory subunit POLA2 and two primase subunits, the catalytic subunit PRIM1 and the regulatory subunit PRIM2) is recruited to DNA at the replicative forks via direct interactions with MCM10 and WDHD1. The primase subunit of the polymerase alpha complex initiates DNA synthesis by oligomerising short RNA primers on both leading and lagging strands. These primers are initially extended by the polymerase alpha catalytic subunit and subsequently transferred to polymerase delta and polymerase epsilon for processive synthesis on the lagging and leading strand, respectively. In the primase complex, both subunits are necessary for the initial di-nucleotide formation, but the extension of the primer depends only on the catalytic subunit. Synthesizes 9-mer RNA primers (also known as the 'unit length' RNA primers). Incorporates only ribonucleotides in the presence of ribo- and deoxy-nucleotide triphosphates (rNTPs, dNTPs). Requires template thymine or cytidine to start the RNA primer synthesis, with an adenine or guanine at its 5'-end. Binds single stranded DNA. The sequence is that of DNA primase small subunit (PRIM1) from Homo sapiens (Human).